Reading from the N-terminus, the 126-residue chain is Protein ApaG (126 aa).

Residues 2–126 (SQVESPIKIK…FRLAVPGIFQ (125 aa)) enclose the ApaG domain.

This chain is Protein ApaG, found in Shewanella frigidimarina (strain NCIMB 400).